Here is a 210-residue protein sequence, read N- to C-terminus: Ribosomal RNA small subunit methyltransferase G (210 aa).

S-adenosyl-L-methionine is bound by residues Gly74, Phe79, 127–128 (IE), and Arg143.

The protein belongs to the methyltransferase superfamily. RNA methyltransferase RsmG family.

The protein resides in the cytoplasm. It carries out the reaction guanosine(527) in 16S rRNA + S-adenosyl-L-methionine = N(7)-methylguanosine(527) in 16S rRNA + S-adenosyl-L-homocysteine. Functionally, specifically methylates the N7 position of guanine in position 527 of 16S rRNA. This chain is Ribosomal RNA small subunit methyltransferase G, found in Chelativorans sp. (strain BNC1).